The chain runs to 125 residues: Diol dehydratase-reactivating factor small subunit (125 aa).

Residue Glu-31 coordinates Mg(2+).

It belongs to the DdrB/PduH family. As to quaternary structure, component of the DDR complex, a heterotetramer of DdrA(2)/DdrB(2). The DDR complex interacts with the diol dehydratase complex in the presence of ADP but not ATP. Mg(2+) serves as cofactor.

It catalyses the reaction ATP + H2O = ADP + phosphate + H(+). Small subunit of the diol dehydratase-reactivating factor (DDR), which reactivates suicidally inhibited adenosylcobalamin-dependent diol dehydratase (DD, pddA, pddB, pddC). DDR acts as a chaperone, reactivates inactivated DD holoenzyme in the presence of ATP, Mg(2+) and free adenosylcobalamin (AdoCbl), by mediating the exchange of the tightly bound damaged cofactor AdoCbl for a free intact one. Reactivation takes place in two steps: ADP-dependent cobalamin release, and ATP-dependent dissociation of the DD apoenzyme-DDR complex. DDR has weak ATPase activity which is required for DD reactivation. Activates glycerol-inactivated, O2-inactivated holoenzyme and inactivated enzyme-cyanocobalamin complex. Also reactivates glycerol-inactivated hologlycerol dehydratase, a DD isozyme. The chain is Diol dehydratase-reactivating factor small subunit from Klebsiella michiganensis (strain ATCC 8724 / DSM 4798 / JCM 20051 / NBRC 3318 / NRRL B-199 / KCTC 1686 / BUCSAV 143 / CCM 1901).